The primary structure comprises 91 residues: Large ribosomal subunit protein uL23c (91 aa).

This sequence belongs to the universal ribosomal protein uL23 family. As to quaternary structure, part of the 50S ribosomal subunit.

The protein localises to the plastid. It localises to the chloroplast. In terms of biological role, binds to 23S rRNA. The sequence is that of Large ribosomal subunit protein uL23c (rpl23) from Physcomitrium patens (Spreading-leaved earth moss).